Consider the following 400-residue polypeptide: DNA primase small subunit PriS (400 aa).

Active-site residues include aspartate 98, aspartate 100, and aspartate 306.

The protein belongs to the eukaryotic-type primase small subunit family. In terms of assembly, heterodimer of a small subunit (PriS) and a large subunit (PriL). Mg(2+) is required as a cofactor. Requires Mn(2+) as cofactor.

Functionally, catalytic subunit of DNA primase, an RNA polymerase that catalyzes the synthesis of short RNA molecules used as primers for DNA polymerase during DNA replication. The small subunit contains the primase catalytic core and has DNA synthesis activity on its own. Binding to the large subunit stabilizes and modulates the activity, increasing the rate of DNA synthesis while decreasing the length of the DNA fragments, and conferring RNA synthesis capability. The DNA polymerase activity may enable DNA primase to also catalyze primer extension after primer synthesis. May also play a role in DNA repair. This Methanocella arvoryzae (strain DSM 22066 / NBRC 105507 / MRE50) protein is DNA primase small subunit PriS.